The sequence spans 490 residues: ATP synthase subunit beta, chloroplastic (490 aa).

Gly170–Thr177 contacts ATP.

The protein belongs to the ATPase alpha/beta chains family. As to quaternary structure, F-type ATPases have 2 components, CF(1) - the catalytic core - and CF(0) - the membrane proton channel. CF(1) has five subunits: alpha(3), beta(3), gamma(1), delta(1), epsilon(1). CF(0) has four main subunits: a(1), b(1), b'(1) and c(9-12).

It is found in the plastid. The protein localises to the chloroplast thylakoid membrane. The catalysed reaction is ATP + H2O + 4 H(+)(in) = ADP + phosphate + 5 H(+)(out). Functionally, produces ATP from ADP in the presence of a proton gradient across the membrane. The catalytic sites are hosted primarily by the beta subunits. The chain is ATP synthase subunit beta, chloroplastic from Cressa truxillensis (Spreading alkaliweed).